The sequence spans 428 residues: Serine--tRNA ligase (428 aa).

231 to 233 (TSE) provides a ligand contact to L-serine. ATP is bound by residues 262–264 (RRE) and Val-278. Glu-285 contributes to the L-serine binding site. 349 to 352 (ELTS) contributes to the ATP binding site. Residue Thr-384 coordinates L-serine.

It belongs to the class-II aminoacyl-tRNA synthetase family. Type-1 seryl-tRNA synthetase subfamily. As to quaternary structure, homodimer. The tRNA molecule binds across the dimer.

Its subcellular location is the cytoplasm. The catalysed reaction is tRNA(Ser) + L-serine + ATP = L-seryl-tRNA(Ser) + AMP + diphosphate + H(+). The enzyme catalyses tRNA(Sec) + L-serine + ATP = L-seryl-tRNA(Sec) + AMP + diphosphate + H(+). It participates in aminoacyl-tRNA biosynthesis; selenocysteinyl-tRNA(Sec) biosynthesis; L-seryl-tRNA(Sec) from L-serine and tRNA(Sec): step 1/1. Catalyzes the attachment of serine to tRNA(Ser). Is also able to aminoacylate tRNA(Sec) with serine, to form the misacylated tRNA L-seryl-tRNA(Sec), which will be further converted into selenocysteinyl-tRNA(Sec). In Bifidobacterium animalis subsp. lactis (strain AD011), this protein is Serine--tRNA ligase.